The primary structure comprises 156 residues: MGASVKPAARRNARQFALQAIYSWQITKENVATIEEQFLTSGKYDEEEHRAAEPALAAPETDVSYFRDLLAGVVLNHNELDSKLRPFVSRPMQDLDMMELALLRLAMYEMTRREDVPYKVVINEAIELAKVFAAEDSHKFVNGVLDKAAPHVRKKA.

This sequence belongs to the NusB family.

Involved in transcription antitermination. Required for transcription of ribosomal RNA (rRNA) genes. Binds specifically to the boxA antiterminator sequence of the ribosomal RNA (rrn) operons. This chain is Transcription antitermination protein NusB, found in Vibrio cholerae serotype O1 (strain ATCC 39541 / Classical Ogawa 395 / O395).